A 131-amino-acid polypeptide reads, in one-letter code: Small ribosomal subunit protein uS11 (131 aa).

Belongs to the universal ribosomal protein uS11 family. Part of the 30S ribosomal subunit. Interacts with proteins S7 and S18. Binds to IF-3.

Its function is as follows. Located on the platform of the 30S subunit, it bridges several disparate RNA helices of the 16S rRNA. Forms part of the Shine-Dalgarno cleft in the 70S ribosome. This chain is Small ribosomal subunit protein uS11, found in Wigglesworthia glossinidia brevipalpis.